A 348-amino-acid polypeptide reads, in one-letter code: Putative S-adenosyl-L-methionine-dependent methyltransferase MRA_3439 (348 aa).

S-adenosyl-L-methionine contacts are provided by residues aspartate 171 and 200 to 201; that span reads DL.

Belongs to the UPF0677 family.

Functionally, exhibits S-adenosyl-L-methionine-dependent methyltransferase activity. This is Putative S-adenosyl-L-methionine-dependent methyltransferase MRA_3439 from Mycobacterium tuberculosis (strain ATCC 25177 / H37Ra).